Consider the following 770-residue polypeptide: DNA ligase 1 (770 aa).

The span at 1–18 (MSTGEGTAEQTATGTPAQ) shows a compositional bias: low complexity. Residues 1–27 (MSTGEGTAEQTATGTPAQNGRESIPSD) form a disordered region. NAD(+)-binding positions include 57–61 (DAEFD), 106–107 (SL), and glutamate 142. Lysine 144 functions as the N6-AMP-lysine intermediate in the catalytic mechanism. Arginine 165, glutamate 202, lysine 318, and lysine 342 together coordinate NAD(+). Zn(2+)-binding residues include cysteine 439, cysteine 442, cysteine 458, and cysteine 464. Residues 657–746 (STPRTLEGLT…PAAVGDAAEA (90 aa)) enclose the BRCT domain. A disordered region spans residues 741–770 (GDAAEADGGDAPEESAALQEEKAAAVEETA). Acidic residues predominate over residues 744–753 (AEADGGDAPE). Basic and acidic residues predominate over residues 759-770 (QEEKAAAVEETA).

This sequence belongs to the NAD-dependent DNA ligase family. LigA subfamily. The cofactor is Mg(2+). Mn(2+) is required as a cofactor.

The enzyme catalyses NAD(+) + (deoxyribonucleotide)n-3'-hydroxyl + 5'-phospho-(deoxyribonucleotide)m = (deoxyribonucleotide)n+m + AMP + beta-nicotinamide D-nucleotide.. Its function is as follows. DNA ligase that catalyzes the formation of phosphodiester linkages between 5'-phosphoryl and 3'-hydroxyl groups in double-stranded DNA using NAD as a coenzyme and as the energy source for the reaction. It is essential for DNA replication and repair of damaged DNA. This is DNA ligase 1 from Pseudarthrobacter chlorophenolicus (strain ATCC 700700 / DSM 12829 / CIP 107037 / JCM 12360 / KCTC 9906 / NCIMB 13794 / A6) (Arthrobacter chlorophenolicus).